The chain runs to 806 residues: Phenylalanine--tRNA ligase beta subunit (806 aa).

A tRNA-binding domain is found at 40–155 (NKGVKGVVVG…SDAEVGADAL (116 aa)). One can recognise a B5 domain in the interval 409–484 (VQERTVSVTA…RLYGYDHIPV (76 aa)). Mg(2+) is bound by residues Asp462, Asp468, Glu471, and Glu472. Residues 712-805 (PRFPSMTRDM…VEEKFGAELR (94 aa)) form the FDX-ACB domain.

It belongs to the phenylalanyl-tRNA synthetase beta subunit family. Type 1 subfamily. As to quaternary structure, tetramer of two alpha and two beta subunits. Requires Mg(2+) as cofactor.

The protein localises to the cytoplasm. The enzyme catalyses tRNA(Phe) + L-phenylalanine + ATP = L-phenylalanyl-tRNA(Phe) + AMP + diphosphate + H(+). The polypeptide is Phenylalanine--tRNA ligase beta subunit (Bacillus thuringiensis subsp. konkukian (strain 97-27)).